The following is an 82-amino-acid chain: Small ribosomal subunit protein bS18 (82 aa).

Residues 1 to 20 (MSETSSAPVRRPFHRRRKTC) form a disordered region.

The protein belongs to the bacterial ribosomal protein bS18 family. As to quaternary structure, part of the 30S ribosomal subunit. Forms a tight heterodimer with protein bS6.

Functionally, binds as a heterodimer with protein bS6 to the central domain of the 16S rRNA, where it helps stabilize the platform of the 30S subunit. In Rhizobium johnstonii (strain DSM 114642 / LMG 32736 / 3841) (Rhizobium leguminosarum bv. viciae), this protein is Small ribosomal subunit protein bS18.